The sequence spans 187 residues: Anterior gradient protein 1 (187 aa).

A signal peptide spans 1 to 20; that stretch reads MQTGLSLVCLVLLCSALGEA.

Belongs to the AGR family.

It localises to the secreted. Its function is as follows. Probably involved in cement gland formation. In Xenopus tropicalis (Western clawed frog), this protein is Anterior gradient protein 1 (ag1).